A 414-amino-acid polypeptide reads, in one-letter code: Esterase FrsA (414 aa).

It belongs to the FrsA family.

The catalysed reaction is a carboxylic ester + H2O = an alcohol + a carboxylate + H(+). Functionally, catalyzes the hydrolysis of esters. The sequence is that of Esterase FrsA from Escherichia coli O17:K52:H18 (strain UMN026 / ExPEC).